Here is a 383-residue protein sequence, read N- to C-terminus: Homoserine O-succinyltransferase (383 aa).

In terms of domain architecture, AB hydrolase-1 spans 51-361; sequence NALLICHALS…ESDFGHDAFL (311 aa). Ser157 acts as the Nucleophile in catalysis. Residue Arg227 coordinates substrate. Residues Asp324 and His357 contribute to the active site. Asp358 serves as a coordination point for substrate.

Belongs to the AB hydrolase superfamily. MetX family. As to quaternary structure, homodimer.

The protein localises to the cytoplasm. The catalysed reaction is L-homoserine + succinyl-CoA = O-succinyl-L-homoserine + CoA. It participates in amino-acid biosynthesis; L-methionine biosynthesis via de novo pathway; O-succinyl-L-homoserine from L-homoserine: step 1/1. In terms of biological role, transfers a succinyl group from succinyl-CoA to L-homoserine, forming succinyl-L-homoserine. The protein is Homoserine O-succinyltransferase of Teredinibacter turnerae (strain ATCC 39867 / T7901).